Here is a 455-residue protein sequence, read N- to C-terminus: Ribulose bisphosphate carboxylase large chain (455 aa).

Position 5 is an N6,N6,N6-trimethyllysine (lysine 5). Positions 114 and 164 each coordinate substrate. The active-site Proton acceptor is the lysine 166. Lysine 168 contributes to the substrate binding site. Residues lysine 192, aspartate 194, and glutamate 195 each contribute to the Mg(2+) site. Position 192 is an N6-carboxylysine (lysine 192). Histidine 285 (proton acceptor) is an active-site residue. 3 residues coordinate substrate: arginine 286, histidine 318, and serine 370.

Belongs to the RuBisCO large chain family. Type I subfamily. In terms of assembly, heterohexadecamer of 8 large chains and 8 small chains. It depends on Mg(2+) as a cofactor.

It is found in the plastid. The protein localises to the chloroplast. It carries out the reaction 2 (2R)-3-phosphoglycerate + 2 H(+) = D-ribulose 1,5-bisphosphate + CO2 + H2O. The catalysed reaction is D-ribulose 1,5-bisphosphate + O2 = 2-phosphoglycolate + (2R)-3-phosphoglycerate + 2 H(+). Functionally, ruBisCO catalyzes two reactions: the carboxylation of D-ribulose 1,5-bisphosphate, the primary event in carbon dioxide fixation, as well as the oxidative fragmentation of the pentose substrate in the photorespiration process. Both reactions occur simultaneously and in competition at the same active site. The sequence is that of Ribulose bisphosphate carboxylase large chain from Tamarindus indica (Tamarind).